The chain runs to 134 residues: ATP synthase epsilon chain (134 aa).

This sequence belongs to the ATPase epsilon chain family. As to quaternary structure, F-type ATPases have 2 components, CF(1) - the catalytic core - and CF(0) - the membrane proton channel. CF(1) has five subunits: alpha(3), beta(3), gamma(1), delta(1), epsilon(1). CF(0) has three main subunits: a, b and c. In this bacterium the a and b subunits are transcribed but do not seem to be translated, thus the ATP synthase consists of the alpha, beta, gamma, delta, epsilon and c subunits.

It localises to the cell membrane. Produces ATP from ADP in the presence of a proton gradient across the membrane. The sequence is that of ATP synthase epsilon chain from Moorella thermoacetica (strain ATCC 39073 / JCM 9320).